We begin with the raw amino-acid sequence, 146 residues long: Hemoglobin subunit beta (146 aa).

The residue at position 1 (valine 1) is an N-acetylvaline. The 145-residue stretch at 2–146 (HLTGEEKSLV…VANALAHKYH (145 aa)) folds into the Globin domain. The residue at position 12 (threonine 12) is a Phosphothreonine. Serine 44 carries the post-translational modification Phosphoserine. Residue lysine 59 is modified to N6-acetyllysine. Histidine 63 contributes to the heme b binding site. Residue lysine 82 is modified to N6-acetyllysine. Position 92 (histidine 92) interacts with heme b. An S-nitrosocysteine modification is found at cysteine 93. Position 144 is an N6-acetyllysine (lysine 144).

The protein belongs to the globin family. Heterotetramer of two alpha chains and two beta chains. Red blood cells.

Functionally, involved in oxygen transport from the lung to the various peripheral tissues. This Ursus maritimus (Polar bear) protein is Hemoglobin subunit beta (HBB).